The primary structure comprises 379 residues: MKIMIFICGEGLGHTSRCLALGKELLAAGHEIEFGAYGYSRDLVEKTGYRIHEIPSEIKLVGKAGGFDLSGSIEATLKNARILGGPKVLKLIKDFKPDVVVSDSYYLGTLAAMLLNIPVYLIINQSNMEDFFKNRGVPIRLLGDLTKKFYREVFEKTDKIIIPDYPLPYTVCRKNLNFSPGLWEKLYYSGPLVKEKYEEVEQIPLKKPHIVSLIGGFGYREPIFRKVLTTAALDSGINYTLISGPSLDPSKFKEIPKNVQILRFVGDTFPYIRSSDAVIAPGGHSTMMEALSFGTPILSFPDEGHSEQENNAAVIEEEGYGRMLSYSTPPEVILECIREVLEDKKYRDKVKRLQRLASELDGPKAVRELLEKEAGKKVS.

The protein belongs to the glycosyltransferase 28 family.

This is an uncharacterized protein from Methanosarcina mazei (strain ATCC BAA-159 / DSM 3647 / Goe1 / Go1 / JCM 11833 / OCM 88) (Methanosarcina frisia).